The sequence spans 281 residues: Putative zinc-binding protein ORF11 (281 aa).

The chain is Putative zinc-binding protein ORF11 (ORF11) from Ictaluridae (bullhead catfishes).